We begin with the raw amino-acid sequence, 154 residues long: Iron-sulfur cluster assembly enzyme IscU (154 aa).

This sequence belongs to the NifU family. Component of the mitochondrial core iron-sulfur cluster (ISC) assembly complex at least composed of the cystein desulfurase Nfs1, the scaffold protein IscU, the accessory protein bcn92/Isd11/Lyrm4, and probably fh/frataxin. Interacts with Nfs1. Requires Fe(2+) as cofactor. It depends on [2Fe-2S] cluster as a cofactor.

The protein operates within cofactor biosynthesis; iron-sulfur cluster biosynthesis. Scaffold protein for the de novo synthesis of iron-sulfur (Fe-S) clusters within mitochondria, which is required for maturation of both mitochondrial and cytoplasmic [2Fe-2S] and [4Fe-4S] proteins. Component of the mitochondrial core iron-sulfur cluster (ISC) assembly complex; regulates its activity. In Drosophila melanogaster (Fruit fly), this protein is Iron-sulfur cluster assembly enzyme IscU.